Consider the following 250-residue polypeptide: Golgi SNAP receptor complex member 1 (250 aa).

Ala2 is modified (N-acetylalanine). At Ala2–Asp229 the chain is on the cytoplasmic side. Residues Trp9–Phe30 are a coiled coil. Residues Ser38–Asn59 form a disordered region. Positions Ser41 to Ser51 are enriched in basic and acidic residues. Positions Glu68–Ala95 form a coiled coil. Ser141 carries the phosphoserine modification. A helical; Anchor for type IV membrane protein transmembrane segment spans residues Ser230 to His250.

This sequence belongs to the GOSR1 family. As to quaternary structure, component of several multiprotein Golgi SNARE complexes. Identified in a SNARE complex with BET1, STX5 and YKT6, in a SNARE complex with BET1L, STX5 and YKT6, in a SNARE complex with STX5, GOSR2, SEC22B and BET1, and in complex with STX5 and COG3. Interacts with GABARAPL2.

The protein resides in the golgi apparatus membrane. Its function is as follows. Involved in transport from the ER to the Golgi apparatus as well as in intra-Golgi transport. It belongs to a super-family of proteins called t-SNAREs or soluble NSF (N-ethylmaleimide-sensitive factor) attachment protein receptor. May play a protective role against hydrogen peroxide induced cytotoxicity under glutathione depleted conditions in neuronal cells by regulating the intracellular ROS levels via inhibition of p38 MAPK (MAPK11, MAPK12, MAPK13 and MAPK14). Participates in docking and fusion stage of ER to cis-Golgi transport. Plays an important physiological role in VLDL-transport vesicle-Golgi fusion and thus in VLDL delivery to the hepatic cis-Golgi. The protein is Golgi SNAP receptor complex member 1 (GOSR1) of Homo sapiens (Human).